A 234-amino-acid chain; its full sequence is Myelin protein zero-like protein 3 (234 aa).

A signal peptide spans 1–31; sequence MQQSGVPGSRGCALCPLLGVLFFQGVYVIFS. An Ig-like V-type domain is found at 32-148; sequence LEIKADAHVR…NIPATELTVT (117 aa). The Extracellular segment spans residues 32-158; it reads LEIKADAHVR…ERGFGTMLSS (127 aa). Cys52 and Cys128 are joined by a disulfide. N-linked (GlcNAc...) asparagine glycosylation is present at Asn123. Residues 159–179 traverse the membrane as a helical segment; that stretch reads VALLSILVFIPSTVVVILLLV. Topologically, residues 180–234 are cytoplasmic; it reads RMGRKSAGLKKRSKSGYKKSSIEVSDDTDQEGDDCMAKLCVRCAECVDSDYEETY.

Belongs to the myelin P0 protein family.

The protein localises to the membrane. Its function is as follows. Mediates homophilic cell-cell adhesion. This is Myelin protein zero-like protein 3 (MPZL3) from Bos taurus (Bovine).